A 539-amino-acid chain; its full sequence is Fucosyltransferase 2 (539 aa).

At 1-5 the chain is on the cytoplasmic side; sequence MRITE. A helical; Signal-anchor for type II membrane protein membrane pass occupies residues 6-26; that stretch reads ILALFMVLVPVSLVIVAMFGY. Residues 27–539 are Lumenal-facing; it reads DQGNGFVQAS…SWGLKLVDNF (513 aa). 3 N-linked (GlcNAc...) asparagine glycosylation sites follow: asparagine 44, asparagine 231, and asparagine 482.

The protein belongs to the glycosyltransferase 37 family. In terms of tissue distribution, expressed in roots, stems, leaves, flowers, siliques and seedlings.

It is found in the golgi apparatus. The protein localises to the golgi stack membrane. It participates in protein modification; protein glycosylation. Functionally, may be involved in cell wall biosynthesis. May act as a fucosyltransferase. This Arabidopsis thaliana (Mouse-ear cress) protein is Fucosyltransferase 2 (FUT2).